We begin with the raw amino-acid sequence, 381 residues long: Queuine tRNA-ribosyltransferase (381 aa).

Asp-96 acts as the Proton acceptor in catalysis. Residues 96–100 (DSGGF), Asp-150, Gln-193, and Gly-220 contribute to the substrate site. Residues 251–257 (GVGSPDA) are RNA binding. Asp-270 serves as the catalytic Nucleophile. The segment at 275-279 (TRIAR) is RNA binding; important for wobble base 34 recognition. Zn(2+)-binding residues include Cys-308, Cys-310, Cys-313, and His-339.

Belongs to the queuine tRNA-ribosyltransferase family. In terms of assembly, homodimer. Within each dimer, one monomer is responsible for RNA recognition and catalysis, while the other monomer binds to the replacement base PreQ1. Zn(2+) is required as a cofactor.

The catalysed reaction is 7-aminomethyl-7-carbaguanine + guanosine(34) in tRNA = 7-aminomethyl-7-carbaguanosine(34) in tRNA + guanine. The protein operates within tRNA modification; tRNA-queuosine biosynthesis. Its function is as follows. Catalyzes the base-exchange of a guanine (G) residue with the queuine precursor 7-aminomethyl-7-deazaguanine (PreQ1) at position 34 (anticodon wobble position) in tRNAs with GU(N) anticodons (tRNA-Asp, -Asn, -His and -Tyr). Catalysis occurs through a double-displacement mechanism. The nucleophile active site attacks the C1' of nucleotide 34 to detach the guanine base from the RNA, forming a covalent enzyme-RNA intermediate. The proton acceptor active site deprotonates the incoming PreQ1, allowing a nucleophilic attack on the C1' of the ribose to form the product. After dissociation, two additional enzymatic reactions on the tRNA convert PreQ1 to queuine (Q), resulting in the hypermodified nucleoside queuosine (7-(((4,5-cis-dihydroxy-2-cyclopenten-1-yl)amino)methyl)-7-deazaguanosine). This chain is Queuine tRNA-ribosyltransferase, found in Bacillus velezensis (strain DSM 23117 / BGSC 10A6 / LMG 26770 / FZB42) (Bacillus amyloliquefaciens subsp. plantarum).